A 283-amino-acid chain; its full sequence is 4-diphosphocytidyl-2-C-methyl-D-erythritol kinase (283 aa).

Residue K13 is part of the active site. 96–106 contributes to the ATP binding site; it reads PMGGGIGGGSS. D138 is an active-site residue.

The protein belongs to the GHMP kinase family. IspE subfamily.

The catalysed reaction is 4-CDP-2-C-methyl-D-erythritol + ATP = 4-CDP-2-C-methyl-D-erythritol 2-phosphate + ADP + H(+). It participates in isoprenoid biosynthesis; isopentenyl diphosphate biosynthesis via DXP pathway; isopentenyl diphosphate from 1-deoxy-D-xylulose 5-phosphate: step 3/6. In terms of biological role, catalyzes the phosphorylation of the position 2 hydroxy group of 4-diphosphocytidyl-2C-methyl-D-erythritol. The sequence is that of 4-diphosphocytidyl-2-C-methyl-D-erythritol kinase from Pseudomonas fluorescens (strain SBW25).